We begin with the raw amino-acid sequence, 282 residues long: Undecaprenyl-diphosphatase (282 aa).

7 helical membrane passes run 40 to 60 (GAAFTAIIQIGTLAAVLMYFW), 85 to 105 (ARMGWMIAAGTIPIVVFGLLF), 115 to 135 (SLYWISGALIGLALLLSLAEW), 153 to 173 (IGWKEALLIGLAQSIALIPGS), 193 to 213 (AARFSFLLSLPAVFAAGIFQL), 230 to 250 (LAAATFTSAVVGYLSIAFLLS), and 258 to 278 (TIFIIYRLLAGILLLLLLSTG).

Belongs to the UppP family.

It is found in the cell inner membrane. The catalysed reaction is di-trans,octa-cis-undecaprenyl diphosphate + H2O = di-trans,octa-cis-undecaprenyl phosphate + phosphate + H(+). In terms of biological role, catalyzes the dephosphorylation of undecaprenyl diphosphate (UPP). Confers resistance to bacitracin. The polypeptide is Undecaprenyl-diphosphatase (Chlorobium phaeovibrioides (strain DSM 265 / 1930) (Prosthecochloris vibrioformis (strain DSM 265))).